The chain runs to 204 residues: Peptide deformylase (204 aa).

2 residues coordinate Fe cation: C131 and H174. Residue E175 is part of the active site. H178 serves as a coordination point for Fe cation.

The protein belongs to the polypeptide deformylase family. Fe(2+) is required as a cofactor.

The catalysed reaction is N-terminal N-formyl-L-methionyl-[peptide] + H2O = N-terminal L-methionyl-[peptide] + formate. Functionally, removes the formyl group from the N-terminal Met of newly synthesized proteins. Requires at least a dipeptide for an efficient rate of reaction. N-terminal L-methionine is a prerequisite for activity but the enzyme has broad specificity at other positions. The protein is Peptide deformylase of Streptococcus thermophilus (strain CNRZ 1066).